A 204-amino-acid polypeptide reads, in one-letter code: Matrix-remodeling-associated protein 7 (204 aa).

Residues 7–27 (LLAALPALATALALLLAWLLV) form a helical membrane-spanning segment. The tract at residues 32-148 (AASPEPARAP…FSFKYSPGKL (117 aa)) is disordered. The segment covering 38-47 (ARAPPEPAPP) has biased composition (pro residues). A compositionally biased stretch (low complexity) spans 63-103 (EPAASPAGPEEPGEPAGLGELGEPAGPGEPEGPGDPAAAPA). Over residues 110–126 (VEARQEEEQDLDGEKGP) the composition is skewed to basic and acidic residues. S191 bears the Phosphoserine mark.

The protein localises to the membrane. This Homo sapiens (Human) protein is Matrix-remodeling-associated protein 7 (MXRA7).